Reading from the N-terminus, the 240-residue chain is Agamous-like MADS-box protein AGL16 (240 aa).

The MADS-box domain occupies 1–61; it reads MGRGKIAIKR…GRLYDFSSSS (61 aa). Residues 86–176 enclose the K-box domain; it reads IQFWQKEAAI…HKKVNLMHQQ (91 aa).

Homodimer. Interacts with AGL15, AGL24, AP1, AGL6, AG, AGL1, AGL11, AGL5, SEP3, SEP1, AGL63, AGL14, SOC1 and AGL21. Interacts with AGL63. Interacts with SVP. In terms of tissue distribution, expressed at high levels in leaves, moderate levels in roots, seedlings and stems, and at low levels in flowers, pollen and siliques. Accumulates in leaf guard cells and trichomes. Also present in epidermal cells of roots. Expressed in mature guard cells.

It is found in the nucleus. Its function is as follows. Probable transcription factor involved in the regulation of flowering time in long-day photoperiod. Participates in the repression of FT expression and floral transition, by interacting closely with the FLC-SVP pathways. Functions in the satellite meristemoid lineage of stomatal development. This is Agamous-like MADS-box protein AGL16 (AGL16) from Arabidopsis thaliana (Mouse-ear cress).